The sequence spans 511 residues: Maturase K (511 aa).

Belongs to the intron maturase 2 family. MatK subfamily.

The protein localises to the plastid. It localises to the chloroplast. Its function is as follows. Usually encoded in the trnK tRNA gene intron. Probably assists in splicing its own and other chloroplast group II introns. The chain is Maturase K from Lolium perenne (Perennial ryegrass).